Here is a 149-residue protein sequence, read N- to C-terminus: Calmodulin (149 aa).

An N-acetylalanine modification is found at Ala2. 4 EF-hand domains span residues 8-43 (EQIA…LGQN), 44-79 (PTEA…KMKD), 81-116 (DSEE…LGEK), and 117-149 (LTDE…MTTK). 14 residues coordinate Ca(2+): Asp21, Asp23, Asp25, Thr27, Glu32, Asp57, Asp59, Asn61, Thr63, Glu68, Asp94, Asp96, Asn98, and Glu105. Residue Lys116 is modified to N6,N6,N6-trimethyllysine. Ca(2+)-binding residues include Asp130, Asp132, Asp134, Gln136, and Glu141.

Belongs to the calmodulin family. As to quaternary structure, interacts (in the presence of Ca(2+)) with pde-1, madf-3, rpl-7A, tax-6, efk-1, npp-1, obr-4, sos-1, akt-1, unc-13, tag-196, ugt-48, nmy-2, F27D4.4, ddx-23, efa-6 and R11H6.4.

Its function is as follows. Calmodulin mediates the control of a large number of enzymes, ion channels and other proteins by Ca(2+). Among the enzymes to be stimulated by the calmodulin-Ca(2+) complex are a number of protein kinases and phosphatases. This chain is Calmodulin (cmd-1), found in Caenorhabditis elegans.